Reading from the N-terminus, the 233-residue chain is Ribulose-phosphate 3-epimerase (233 aa).

Ser-16 lines the substrate pocket. The a divalent metal cation site is built by His-41, Asp-43, and His-74. Asp-43 (proton acceptor) is an active-site residue. Residues His-74, Gly-150–Gly-153, Asp-185–Gly-187, and Ala-207–Ser-208 each bind substrate. Residue Asp-185 coordinates a divalent metal cation. Residue Asp-185 is the Proton donor of the active site.

This sequence belongs to the ribulose-phosphate 3-epimerase family. A divalent metal cation serves as cofactor.

It catalyses the reaction D-ribulose 5-phosphate = D-xylulose 5-phosphate. The protein operates within carbohydrate degradation. Catalyzes the reversible epimerization of D-ribulose 5-phosphate to D-xylulose 5-phosphate. In Chlamydia trachomatis serovar D (strain ATCC VR-885 / DSM 19411 / UW-3/Cx), this protein is Ribulose-phosphate 3-epimerase.